The sequence spans 254 residues: Isoprenyl transferase (254 aa).

The active site involves Asp-34. Residue Asp-34 coordinates Mg(2+). Substrate contacts are provided by residues 35-38 (GNGR), Trp-39, Arg-47, His-51, and 79-81 (STE). Asn-82 acts as the Proton acceptor in catalysis. Substrate contacts are provided by residues Trp-83, Arg-85, Arg-202, and 208-210 (RIS). Glu-221 is a binding site for Mg(2+).

Belongs to the UPP synthase family. In terms of assembly, homodimer. Requires Mg(2+) as cofactor.

In terms of biological role, catalyzes the condensation of isopentenyl diphosphate (IPP) with allylic pyrophosphates generating different type of terpenoids. This Staphylococcus saprophyticus subsp. saprophyticus (strain ATCC 15305 / DSM 20229 / NCIMB 8711 / NCTC 7292 / S-41) protein is Isoprenyl transferase.